A 303-amino-acid chain; its full sequence is MDSSGTVRNQTSDDHSRPADAAGTAATLYGAPAETRSPRRSRFTVRDVAAAKSRGERWSMLTAYDFTTATVFDEAEIPVLLVGDSAANVVYGYDTTVPVTVDELIPLVRAVVRGAPHAMVVADLPFGSYQAGPEQALATATRFLKEGGAQAVKLEGGARVAPAVAALVGAGIPVIGHLGLTPQSIHALGGYRVQGRDEAGEVLLADALAIEAAGAFAVVLEVVPADLAARVTKELHIATVGIGAGADCDAQVLVWQDMAGLSGGHVPRFVKRYADLRTVLGDAVRTYRDEVRGGQYPTVEHSY.

The span at 1 to 10 (MDSSGTVRNQ) shows a compositional bias: polar residues. The disordered stretch occupies residues 1–41 (MDSSGTVRNQTSDDHSRPADAAGTAATLYGAPAETRSPRRS). The Mg(2+) site is built by D84 and D123. 3-methyl-2-oxobutanoate is bound by residues 84-85 (DS), D123, and K153. E155 serves as a coordination point for Mg(2+). The Proton acceptor role is filled by E221.

Belongs to the PanB family. Homodecamer; pentamer of dimers. The cofactor is Mg(2+).

The protein localises to the cytoplasm. The enzyme catalyses 3-methyl-2-oxobutanoate + (6R)-5,10-methylene-5,6,7,8-tetrahydrofolate + H2O = 2-dehydropantoate + (6S)-5,6,7,8-tetrahydrofolate. Its pathway is cofactor biosynthesis; (R)-pantothenate biosynthesis; (R)-pantoate from 3-methyl-2-oxobutanoate: step 1/2. In terms of biological role, catalyzes the reversible reaction in which hydroxymethyl group from 5,10-methylenetetrahydrofolate is transferred onto alpha-ketoisovalerate to form ketopantoate. The sequence is that of 3-methyl-2-oxobutanoate hydroxymethyltransferase from Frankia alni (strain DSM 45986 / CECT 9034 / ACN14a).